Consider the following 372-residue polypeptide: Alanine racemase (372 aa).

Residue K35 is the Proton acceptor; specific for D-alanine of the active site. K35 is modified (N6-(pyridoxal phosphate)lysine). R143 serves as a coordination point for substrate. The active-site Proton acceptor; specific for L-alanine is Y268. M316 is a binding site for substrate.

It belongs to the alanine racemase family. It depends on pyridoxal 5'-phosphate as a cofactor.

It catalyses the reaction L-alanine = D-alanine. The protein operates within amino-acid biosynthesis; D-alanine biosynthesis; D-alanine from L-alanine: step 1/1. In terms of biological role, catalyzes the interconversion of L-alanine and D-alanine. May also act on other amino acids. The chain is Alanine racemase (alr) from Shewanella frigidimarina (strain NCIMB 400).